We begin with the raw amino-acid sequence, 539 residues long: MGSGCSSLSYSSSSTCNATVFSISSSPSSSSSLKLNPSSFLFQNPKTLRNQSPLRCGRSFKMESQKPIFDLEKLDDEFVQKLVYDALVWSSLHGLVVGDKSYQKSGNVPGVGLMHAPIALLPTAFPEAYWKQACNVTPLFNELIDRVSLDGKFLQDSLSRTKKVDVFTSRLLDIHSKMLERNKKEDIRLGLHRFDYMLDEETNSLLQIEMNTISCSFPGLSRLVSQLHQSLLRSYGDQIGIDSERVPINTSTIQFADALAKAWLEYSNPRAVVMVIVQPEERNMYDQHLLSSILREKHNIVVIRKTLAEVEKEGSVQEDETLIVGGQAVAVVYFRSGYTPNDHPSESEWNARLLIEESSAVKCPSIAYHLTGSKKIQQELAKPGVLERFLDNKEDIAKLRKCFAGLWSLDDSEIVKQAIEKPGLFVMKPQREGGGNNIYGDDVRENLLRLQKEGEEGNAAYILMQRIFPKVSNMFLVREGVYHKHQAISELGVYGAYLRSKDEVIVNEQSGYLMRTKIASSDEGGVAAGFGVLDSIYLI.

Residues 1–61 (MGSGCSSLSY…SPLRCGRSFK (61 aa)) constitute a chloroplast transit peptide. Arginine 193 serves as a coordination point for substrate. Glutamate 209 is an ATP binding site. Mg(2+) is bound by residues glutamate 209 and asparagine 211. Residues 213-216 (ISCS), 281-283 (ERN), glutamine 287, and 335-338 (RSGY) each bind substrate. ATP is bound by residues lysine 374, 428 to 437 (KPQREGGGNN), tyrosine 439, 464 to 467 (MQRI), and glutamate 490. Mg(2+) is bound at residue glutamate 432. Arginine 515 is a substrate binding site. ATP is bound by residues lysine 517 and glutamate 523. 526–527 (VA) is a binding site for substrate.

The protein belongs to the eukaryotic GSH synthase family. As to quaternary structure, homodimer. It depends on Mg(2+) as a cofactor.

The protein resides in the plastid. The protein localises to the chloroplast. It catalyses the reaction gamma-L-glutamyl-L-cysteine + glycine + ATP = glutathione + ADP + phosphate + H(+). The protein operates within sulfur metabolism; glutathione biosynthesis; glutathione from L-cysteine and L-glutamate: step 2/2. The polypeptide is Glutathione synthetase, chloroplastic (GSH2) (Arabidopsis thaliana (Mouse-ear cress)).